Reading from the N-terminus, the 456-residue chain is Chromosomal replication initiator protein DnaA 1 (456 aa).

Residues 1–68 form a domain I, interacts with DnaA modulators region; sequence MRAWEEFLLL…KANLINNNGK (68 aa). Residues 68–101 are domain II; it reads KPIRVRVTSLDKSTPFKESQIQQEKTAYFTMQYG. Residues 102–320 are domain III, AAA+ region; it reads DIDPQMSFAN…HALTTLAKRV (219 aa). ATP-binding residues include serine 150, glycine 152, lysine 153, and threonine 154. A domain IV, binds dsDNA region spans residues 321–456; sequence AYKKLSHQLL…AYQSLDLIVD (136 aa).

The protein belongs to the DnaA family. As to quaternary structure, oligomerizes as a right-handed, spiral filament on DNA at oriC.

Its subcellular location is the cytoplasm. Its function is as follows. Plays an essential role in the initiation and regulation of chromosomal replication. ATP-DnaA binds to the origin of replication (oriC) to initiate formation of the DNA replication initiation complex once per cell cycle. Binds the DnaA box (a 9 base pair repeat at the origin) and separates the double-stranded (ds)DNA. Forms a right-handed helical filament on oriC DNA; dsDNA binds to the exterior of the filament while single-stranded (ss)DNA is stabiized in the filament's interior. The ATP-DnaA-oriC complex binds and stabilizes one strand of the AT-rich DNA unwinding element (DUE), permitting loading of DNA polymerase. After initiation quickly degrades to an ADP-DnaA complex that is not apt for DNA replication. Binds acidic phospholipids. In Chlamydia muridarum (strain MoPn / Nigg), this protein is Chromosomal replication initiator protein DnaA 1.